The sequence spans 628 residues: MNLEEIQDPSFLKNYSNKQLEELAADIRRFLIEKLSATGGHIGPNLGVVELTLALHQLFDSPKDKLLWDVGHQAYVHKILTGRAPQFDTLRQYKGLCGFPKRTESEHDVWETGHSSTSLSGAMGMATARDLKGTNENIVAIIGDGALTGGMALEALNHIGHEQKHLIVVLNDNEMSIAPNVGALHSILGRLRTAGKYQKAKEDLETIIRKIPAFGGKLADTAERLKDSLKYLMVSGMFFEEMGFTYLGPVDGHDLDDLKHQLSYAKKTSGPVLVHVLTKKGKGYKPAEEDATGAWHGTGPYKMESGEMVKKPGPPSYPSVFANTLKRIAREDERVVAITPAMPGGSKLDLFAEEFPDRMFDVGIAEQHAATMSAGLATQGMKPVYAVYSTFLQRGYDQVVHDICRQNLNVLIAIDRAGLVGADGETHQGVFDIAFLRSLPNITILNPKDENEFQHMLYTGICYDDGPIAIRYPRGNGTGVKMDASLSRLPIGKWNVLQEGTDAAILTFGTMIPVAEKALAQLKQAGYNIRLINANSVKPLDEKLLEALAEEELPLLTIEESVLQGGFGSAVLEFYNEKGMHVELKRMGIPDYFVEHGSVSELYQEVGLTPERIADTLISMLPQKRKRA.

Thiamine diphosphate is bound by residues His72 and 113–115 (GHS). Mg(2+) is bound at residue Asp144. Residues 145-146 (GA), Asn173, Tyr284, and Glu366 each bind thiamine diphosphate. Asn173 lines the Mg(2+) pocket.

This sequence belongs to the transketolase family. DXPS subfamily. In terms of assembly, homodimer. Mg(2+) is required as a cofactor. It depends on thiamine diphosphate as a cofactor.

The enzyme catalyses D-glyceraldehyde 3-phosphate + pyruvate + H(+) = 1-deoxy-D-xylulose 5-phosphate + CO2. The protein operates within metabolic intermediate biosynthesis; 1-deoxy-D-xylulose 5-phosphate biosynthesis; 1-deoxy-D-xylulose 5-phosphate from D-glyceraldehyde 3-phosphate and pyruvate: step 1/1. Functionally, catalyzes the acyloin condensation reaction between C atoms 2 and 3 of pyruvate and glyceraldehyde 3-phosphate to yield 1-deoxy-D-xylulose-5-phosphate (DXP). In Shouchella clausii (strain KSM-K16) (Alkalihalobacillus clausii), this protein is 1-deoxy-D-xylulose-5-phosphate synthase.